Consider the following 227-residue polypeptide: MTARPLNELVEPGWARALQPVAEQVARMGQFLRAEIAAGRRYLPAGPNVLRAFTYPFDEVKVLIVGQDPYPTPGHAVGLSFSVAPDVSPLPRSLANIFQEYTADLGHPPPSCGDLTPWAQRGVLLLNRVLTVRPSNPASHRGKGWEPVTECAIRALTARQQPLVAILWGRDASTLKPILAQGNCVAIESPHPSPLSASRGFFGSRPFSRANKLLAEMGADEIDWRLP.

D68 serves as the catalytic Proton acceptor.

It belongs to the uracil-DNA glycosylase (UDG) superfamily. UNG family.

Its subcellular location is the cytoplasm. It carries out the reaction Hydrolyzes single-stranded DNA or mismatched double-stranded DNA and polynucleotides, releasing free uracil.. Functionally, excises uracil residues from the DNA which can arise as a result of misincorporation of dUMP residues by DNA polymerase or due to deamination of cytosine. This Mycolicibacterium paratuberculosis (strain ATCC BAA-968 / K-10) (Mycobacterium paratuberculosis) protein is Uracil-DNA glycosylase.